The following is a 227-amino-acid chain: MAGPKHVLLVSEHWDLFFQTKELLNPEEYRCTIGQQYKQELSADLVVCEYSLLPREIRSPKSLEGSFVLVLLDFFDEETSVDLLDRGFWYLIRPITPRILKSAISLFLSQHSLHSVPESIRFGPNVFYVLKLTVETPEGSVHLTPSESGILKRLLINKGQLCLRKHLLEEIKNHAKAIVARNVDVHIASLRKKLGAYGSRIVTLRGVGYLFSDDGDKKFSQQDTKLS.

The Response regulatory domain occupies His-6–Leu-108. Residues Pro-117–Asp-213 constitute a DNA-binding region (ompR/PhoB-type).

As to quaternary structure, homodimer.

May be a global positive regulator of transcription. Binds a cis-acting element of its own promoter DNA sequence and is hence probably also involved in its own transcription activation. The recognition sequence is 5'-WHGAWNH-N(3-5)-WHGAWNH-3', where W is A/T, H is C/A/T, N is G/C/A/T and the linker length in the middle is 3 to 5 nucleotides. The protein is Atypical response regulator protein ChxR of Chlamydia trachomatis serovar L2 (strain ATCC VR-902B / DSM 19102 / 434/Bu).